The sequence spans 150 residues: MSLQFNPISLFLVVLIFLGVVGNNNSITIAATVLLLVQQTFLSKYLPFLDKHGLSIGIIILTIGVLSPIVSGKISLPSFSEFLNWKMLLAVVAGIAVAWLGGRGVSLMGGQPLLVTGLLVGTIIGVALLGGVPVGPLIAAGILSLLIGKG.

The next 4 membrane-spanning stretches (helical) occupy residues 12–34 (LVVLIFLGVVGNNNSITIAATVL), 52–72 (HGLSIGIIILTIGVLSPIVSG), 82–102 (FLNWKMLLAVVAGIAVAWLGG), and 123–143 (IIGVALLGGVPVGPLIAAGIL).

This sequence belongs to the UPF0756 family.

The protein resides in the cell membrane. The polypeptide is UPF0756 membrane protein APL_0366 (Actinobacillus pleuropneumoniae serotype 5b (strain L20)).